Consider the following 126-residue polypeptide: Cysteine-rich tail protein 1 (126 aa).

The disordered stretch occupies residues 1–89; it reads MDPHETLVKN…PAGLAYAGPP (89 aa).

The protein belongs to the CYSRT1 family. As to quaternary structure, interacts with components of the late cornfied envelope (LCE).

Its subcellular location is the cornified envelope. Component of the stratum corneum that may contribute to epidermal antimicrobial host defenses. This Bos taurus (Bovine) protein is Cysteine-rich tail protein 1 (CYSRT1).